Reading from the N-terminus, the 245-residue chain is Type I iodothyronine deiodinase (245 aa).

At 1-9 (LSIRVLLHK) the chain is on the extracellular side. A helical; Signal-anchor for type III membrane protein transmembrane segment spans residues 10 to 30 (LLILLQVTLSVVVGKTMMILF). Over 31 to 245 (PDTTKRYILK…EIRAVLEKLK (215 aa)) the chain is Cytoplasmic. Sec123 is an active-site residue. Sec123 is a non-standard amino acid (selenocysteine).

It belongs to the iodothyronine deiodinase family. In terms of assembly, predominantly monomer. Can form homodimers but homodimerization is not essential for enzyme activity.

It is found in the cell membrane. Its subcellular location is the endoplasmic reticulum membrane. The protein resides in the basolateral cell membrane. The catalysed reaction is 3,3',5-triiodo-L-thyronine + iodide + A + H(+) = L-thyroxine + AH2. The enzyme catalyses 3,3',5'-triiodo-L-thyronine + iodide + A + H(+) = L-thyroxine + AH2. It catalyses the reaction 3,3'-diiodo-L-thyronine + iodide + A + H(+) = 3,3',5'-triiodo-L-thyronine + AH2. It carries out the reaction 3,3'-diiodo-L-thyronine + iodide + A + H(+) = 3,3',5-triiodo-L-thyronine + AH2. The catalysed reaction is 3'-iodo-L-thyronine + iodide + A + H(+) = 3',5'-diiodo-L-thyronine + AH2. The enzyme catalyses 3-iodo-L-thyronine + iodide + A + H(+) = 3,5-diiodo-L-thyronine + AH2. It catalyses the reaction 3-iodo-L-thyronine + iodide + A + H(+) = 3,3'-diiodo-L-thyronine + AH2. It carries out the reaction 3,3'-diiodothyronamine + iodide + A + H(+) = 3,3',5'-triiodothyronamine + AH2. The catalysed reaction is 3'-iodothyronamine + iodide + A + H(+) = 3',5'-diiodothyronamine + AH2. The enzyme catalyses 3-iodothyronamine + iodide + A + H(+) = 3,3'-diiodothyronamine + AH2. It catalyses the reaction 3,3'-diiodothyronamine + iodide + A + H(+) = 3,3',5-triiodothyronamine + AH2. It carries out the reaction 3-iodothyronamine + iodide + A + H(+) = 3,5-diiodothyronamine + AH2. The catalysed reaction is 3,3'-diiodo-L-thyronine sulfate + iodide + A + H(+) = 3,3',5'-triiodo-L-thyronine sulfate + AH2. The enzyme catalyses 3,3',5'-triiodo-L-thyronine sulfate + iodide + A + H(+) = L-thyroxine sulfate + AH2. It catalyses the reaction 3,3'-diiodo-L-thyronine sulfate + iodide + A + H(+) = 3,3',5-triiodo-L-thyronine sulfate + AH2. Plays a crucial role in the metabolism of thyroid hormones (TH) and has specific roles in TH activation and inactivation by deiodination. Catalyzes the deiodiantion of L-thyroxine (T4) to 3,5,3'-triiodothyronine (T3) and 3,3',5'-triiodothyronine (rT3) to 3,3'-diiodothyronine (3,3'-T2) via outer-ring deiodination (ORD). Catalyzes the deiodiantion of T4 to rT3, T3 to 3,3'-T2, 3,5-diiodothyronine (3,5-T2) to 3-monoiodothyronine (3-T1) and 3,3'-T2 to 3-T1 via inner-ring deiodination (IRD). Catalyzes the deiodiantion of 3',5'-diiodothyronine (3',5'-T2) to 3'-monoiodothyronine (3'-T1) via ORD. Catalyzes the phenolic ring deiodinations of 3,3',5'-triiodothyronamine, 3',5'-diiodothyronamine and 3,3'-diiodothyronamine as well as tyrosyl ring deiodinations of 3,5,3'-triiodothyronamine and 3,5-diiodothyronamine. Catalyzes the deiodination of L-thyroxine sulfate and 3,3',5-triiodo-L-thyronine sulfate via IRD and of 3,3',5'-triiodo-L-thyronine sulfate via ORD. This chain is Type I iodothyronine deiodinase (DIO1), found in Gallus gallus (Chicken).